Consider the following 696-residue polypeptide: Polyribonucleotide nucleotidyltransferase (696 aa).

Mg(2+) is bound by residues Asp-486 and Asp-492. One can recognise a KH domain in the interval 553 to 612 (PRITQKQIPKDRIGELIGPGGKMIRAIIEQSGSEISVDDSGKVTIASPSEESKEKAIAMI). The region spanning 622–690 (GKIYDGVIKR…KMGKIDLSRK (69 aa)) is the S1 motif domain.

Belongs to the polyribonucleotide nucleotidyltransferase family. It depends on Mg(2+) as a cofactor.

It localises to the cytoplasm. It catalyses the reaction RNA(n+1) + phosphate = RNA(n) + a ribonucleoside 5'-diphosphate. In terms of biological role, involved in mRNA degradation. Catalyzes the phosphorolysis of single-stranded polyribonucleotides processively in the 3'- to 5'-direction. The polypeptide is Polyribonucleotide nucleotidyltransferase (Leptospira biflexa serovar Patoc (strain Patoc 1 / ATCC 23582 / Paris)).